The chain runs to 279 residues: MEQQEKKKRKIQRSISTQSSSMSSIPLDVTSKILAKLPAKSVLRARCVSKQWSSISTDPYFISNMFPKQSSSSLLIFFKPKRKLFVISIHQNPNEPQHVGICPRLDLFPNSKKTHYLEPYLEKILNLAQTQKQLEGNTIGDNDGQCINGVLYYRASLDQSNVDIIMSFDVSTMYNKDITLWVLEDAKWLCKHFTRASYNDQPLQALSGINGITDDGEFIYVAYVLDSFYILYYDPEKKSYRRVDLQGVGDADFMLRNGLGNMDGIRIHTCLNIESLLSL.

The F-box domain occupies Ser19–Gln69.

The polypeptide is Putative F-box protein At1g50880 (Arabidopsis thaliana (Mouse-ear cress)).